A 95-amino-acid chain; its full sequence is Histone-like DNA-binding protein (95 aa).

Belongs to the bacterial histone-like protein family.

The protein is Histone-like DNA-binding protein of Rickettsia conorii (strain ATCC VR-613 / Malish 7).